Here is a 247-residue protein sequence, read N- to C-terminus: 3-deoxy-manno-octulosonate cytidylyltransferase (247 aa).

The protein belongs to the KdsB family.

The protein localises to the cytoplasm. It carries out the reaction 3-deoxy-alpha-D-manno-oct-2-ulosonate + CTP = CMP-3-deoxy-beta-D-manno-octulosonate + diphosphate. It functions in the pathway nucleotide-sugar biosynthesis; CMP-3-deoxy-D-manno-octulosonate biosynthesis; CMP-3-deoxy-D-manno-octulosonate from 3-deoxy-D-manno-octulosonate and CTP: step 1/1. It participates in bacterial outer membrane biogenesis; lipopolysaccharide biosynthesis. In terms of biological role, activates KDO (a required 8-carbon sugar) for incorporation into bacterial lipopolysaccharide in Gram-negative bacteria. This chain is 3-deoxy-manno-octulosonate cytidylyltransferase, found in Afipia carboxidovorans (strain ATCC 49405 / DSM 1227 / KCTC 32145 / OM5) (Oligotropha carboxidovorans).